A 154-amino-acid chain; its full sequence is Ribosome maturation factor RimP (154 aa).

The protein belongs to the RimP family.

It localises to the cytoplasm. Functionally, required for maturation of 30S ribosomal subunits. The polypeptide is Ribosome maturation factor RimP (Thioalkalivibrio sulfidiphilus (strain HL-EbGR7)).